A 207-amino-acid polypeptide reads, in one-letter code: Protein Nef (207 aa).

Glycine 2 carries the N-myristoyl glycine; by host lipid modification. Serine 6 is modified (phosphoserine; by host). Positions 62-66 are acidic; interacts with host PACS1 and PACS2; stabilizes the interaction of NEF/MHC-I with host AP1M1; necessary for MHC-I internalization; it reads EEDSE. The tract at residues 70–79 is SH3-binding; interaction with Src family tyrosine kinases; that stretch reads PVRPQVPLRP. A PxxP; stabilizes the interaction of NEF/MHC-I with host AP1M1; necessary for MHC-I internalization motif is present at residues 73-76; sequence PQVP. Residues 109 to 125 form a mediates dimerization, Nef-PTE1 interaction region; it reads EILDLWVYNTQGYFPDW. The binding to ATP6V1H stretch occupies residues 149-181; that stretch reads MDPAEVEEANKGENNSLLHPICQHGMEDEDREV. The Dileucine internalization motif; necessary for CD4 internalization signature appears at 165–166; that stretch reads LL. Residues 175–176 carry the Diacidic; necessary for CD4 internalization motif; it reads ED.

The protein belongs to the lentivirus primate group Nef protein family. As to quaternary structure, monomer; cytosolic form. Homodimer; membrane bound form. Interacts with Nef associated p21-activated kinase (PAK2); this interaction activates PAK2. Associates with the Nef-MHC-I-AP1 complex; this complex is required for MHC-I internalization. Interacts (via C-terminus) with host PI3-kinase. Interacts with host PACS1; this interaction seems to be weak. Interacts with host PACS2. Interacts with host LCK and MAPK3; these interactions inhibit the kinase activity of the latter. Interacts with host ATP6V1H; this interaction may play a role in CD4 endocytosis. Associates with the CD4-Nef-AP2 complex; this complex is required for CD4 internalization. Interacts with host AP2 subunit alpha and AP2 subunit sigma2. Interacts with TCR-zeta chain; this interaction up-regulates the Fas ligand (FasL) surface expression. Interacts with host HCK, LYN, and SRC; these interactions activate the Src family kinases. Interacts with MAP3K5; this interaction inhibits the Fas and TNFR-mediated death signals. Interacts with beta-COP and PTE1. Interacts with human RACK1; this increases Nef phosphorylation by PKC. Interacts with TP53; this interaction decreases the half-life of TP53, protecting the infected cell against p53-mediated apoptosis. The virion-associated Nef proteins are cleaved by the viral protease to release the soluble C-terminal core protein. Nef is probably cleaved concomitantly with viral structural proteins on maturation of virus particles. In terms of processing, myristoylated. Post-translationally, phosphorylated on serine residues, probably by host PKCdelta and theta.

It is found in the host cell membrane. The protein resides in the virion. The protein localises to the secreted. It localises to the host Golgi apparatus membrane. Its function is as follows. Factor of infectivity and pathogenicity, required for optimal virus replication. Alters numerous pathways of T-lymphocyte function and down-regulates immunity surface molecules in order to evade host defense and increase viral infectivity. Alters the functionality of other immunity cells, like dendritic cells, monocytes/macrophages and NK cells. In infected CD4(+) T-lymphocytes, down-regulates the surface MHC-I, mature MHC-II, CD4, CD28, CCR5 and CXCR4 molecules. Mediates internalization and degradation of host CD4 through the interaction of with the cytoplasmic tail of CD4, the recruitment of AP-2 (clathrin adapter protein complex 2), internalization through clathrin coated pits, and subsequent transport to endosomes and lysosomes for degradation. Diverts host MHC-I molecules to the trans-Golgi network-associated endosomal compartments by an endocytic pathway to finally target them for degradation. MHC-I down-regulation may involve AP-1 (clathrin adapter protein complex 1) or possibly Src family kinase-ZAP70/Syk-PI3K cascade recruited by PACS2. In consequence infected cells are masked for immune recognition by cytotoxic T-lymphocytes. Decreasing the number of immune receptors also prevents reinfection by more HIV particles (superinfection). Down-regulates host SERINC3 and SERINC5 thereby excluding these proteins from the viral particles. Virion infectivity is drastically higher when SERINC3 or SERINC5 are excluded from the viral envelope, because these host antiviral proteins impair the membrane fusion event necessary for subsequent virion penetration. In terms of biological role, bypasses host T-cell signaling by inducing a transcriptional program nearly identical to that of anti-CD3 cell activation. Interaction with TCR-zeta chain up-regulates the Fas ligand (FasL). Increasing surface FasL molecules and decreasing surface MHC-I molecules on infected CD4(+) cells send attacking cytotoxic CD8+ T-lymphocytes into apoptosis. Functionally, plays a role in optimizing the host cell environment for viral replication without causing cell death by apoptosis. Protects the infected cells from apoptosis in order to keep them alive until the next virus generation is ready to strike. Inhibits the Fas and TNFR-mediated death signals by blocking MAP3K5/ASK1. Decreases the half-life of TP53, protecting the infected cell against p53-mediated apoptosis. Inhibits the apoptotic signals regulated by the Bcl-2 family proteins through the formation of a Nef/PI3-kinase/PAK2 complex that leads to activation of PAK2 and induces phosphorylation of host BAD. Its function is as follows. Extracellular Nef protein targets CD4(+) T-lymphocytes for apoptosis by interacting with CXCR4 surface receptors. The protein is Protein Nef of Homo sapiens (Human).